Consider the following 548-residue polypeptide: 4-methyl-5-nitrocatechol 5-monooxygenase (548 aa).

Belongs to the PheA/TfdB FAD monooxygenase family. In terms of assembly, monomer. FAD serves as cofactor.

The catalysed reaction is 4-methyl-5-nitrocatechol + NADPH + O2 = 2-hydroxy-5-methylquinone + nitrite + NADP(+) + H2O + H(+). It catalyses the reaction 4-methyl-5-nitrocatechol + NADH + O2 = 2-hydroxy-5-methylquinone + nitrite + NAD(+) + H2O + H(+). With respect to regulation, activated by magnesium or manganese ions. Inhibited by concentrations of 4-methyl-5-nitrocatechol (MNC) above 2 mM. Involved in the degradation of 2,4-dinitrotoluene (2,4-DNT). Catalyzes the removal of the nitro group from 4-methyl-5-nitrocatechol (MNC) to yield 2-hydroxy-5-methylquinone. It can use both NADH and NADPH as electron donors, but prefers NADPH. Also able to use 4-nitrocatechol as substrate. The sequence is that of 4-methyl-5-nitrocatechol 5-monooxygenase from Burkholderia sp.